Reading from the N-terminus, the 107-residue chain is uncharacterized protein (107 aa).

This is an uncharacterized protein from Escherichia coli (strain K12).